Reading from the N-terminus, the 240-residue chain is Small ribosomal subunit protein uS3 (240 aa).

Positions 39–109 (IRQHIDANLN…QIRINVVEVN (71 aa)) constitute a KH type-2 domain. A disordered region spans residues 216–240 (TSAANAAPLPRRKSRRQQFEDRSEQ).

Belongs to the universal ribosomal protein uS3 family. As to quaternary structure, part of the 30S ribosomal subunit. Forms a tight complex with proteins S10 and S14.

Binds the lower part of the 30S subunit head. Binds mRNA in the 70S ribosome, positioning it for translation. The chain is Small ribosomal subunit protein uS3 from Picosynechococcus sp. (strain ATCC 27264 / PCC 7002 / PR-6) (Agmenellum quadruplicatum).